The chain runs to 683 residues: MEEERVEGSKRPFQGIIRDVKGRALCYKQDWIAGLRSGFGILAPTTYVFFASALPVIAFGEQLSHDTERSLSTVETLASTALCGVIHSLLGGQPLLILGVAEPTVLMYKYLYDFAKGRPELGKQLYLAWVAWVCVWTALLLFLMAIFNMAYIINRFTRIAGELFGMLIAVLFLQQTIKGMVSEFRIPKGEDSKLEKYQFEWLYTNGLLGLIFTVGLVYTALKSRKARSWPYGTGCCRSFVADYGVPLMVVVWTALSFSTPSKLPSGVPRRLVSPLPWDSVSLTHWTVIKDMGKVSPGYIFAAFIPALMIAGLYFFDHSVVSQLAQQKEFNLKNPSAYHYDILLLGFMVLICGMLGLPPSNGVLPQSPMHTKSLAVFKRQLMRRKMVMTAKESIRQKATSSQVYEDMEQVFIEMDKSPLAETHTTLINELQDLKEAVMKKSDDDGDTGEESGFDPEKHVDAYLPVRVNEQRVSNLLQSLLVIGAVFALPVIKLIPTSLLWGYFAYMAIDSLPDNQFFERTVLLFVPPTRRFKVLEGAHASFVEKVPHKSIAAFTLFQILYFGLCYGVTWIPVAGIMFPVLFFLLVAIRQYLLPKLFKPAYLRELDAAEYEEIPGTPRNPLELSFRSNNSARGVQECDAEILDELTTSRGELKVRTLGHNEDKGHQIYPKEIVEVGDGDMSSSRE.

Residues 1–38 lie on the Cytoplasmic side of the membrane; it reads MEEERVEGSKRPFQGIIRDVKGRALCYKQDWIAGLRSG. Residues 39–59 traverse the membrane as a helical segment; sequence FGILAPTTYVFFASALPVIAF. The Extracellular portion of the chain corresponds to 60 to 80; the sequence is GEQLSHDTERSLSTVETLAST. Residues 81–101 traverse the membrane as a helical segment; sequence ALCGVIHSLLGGQPLLILGVA. Residues 102–126 lie on the Cytoplasmic side of the membrane; it reads EPTVLMYKYLYDFAKGRPELGKQLY. The chain crosses the membrane as a helical span at residues 127–147; that stretch reads LAWVAWVCVWTALLLFLMAIF. Over 148 to 158 the chain is Extracellular; that stretch reads NMAYIINRFTR. The helical transmembrane segment at 159-179 threads the bilayer; that stretch reads IAGELFGMLIAVLFLQQTIKG. Residues 180–200 are Cytoplasmic-facing; that stretch reads MVSEFRIPKGEDSKLEKYQFE. The helical transmembrane segment at 201 to 221 threads the bilayer; sequence WLYTNGLLGLIFTVGLVYTAL. Residues 222–238 are Extracellular-facing; that stretch reads KSRKARSWPYGTGCCRS. Residues 239-259 form a helical membrane-spanning segment; the sequence is FVADYGVPLMVVVWTALSFST. Topologically, residues 260–294 are cytoplasmic; sequence PSKLPSGVPRRLVSPLPWDSVSLTHWTVIKDMGKV. The helical transmembrane segment at 295-315 threads the bilayer; that stretch reads SPGYIFAAFIPALMIAGLYFF. The Extracellular portion of the chain corresponds to 316-335; it reads DHSVVSQLAQQKEFNLKNPS. The chain crosses the membrane as a helical span at residues 336–356; it reads AYHYDILLLGFMVLICGMLGL. Residues 357-477 lie on the Cytoplasmic side of the membrane; it reads PPSNGVLPQS…EQRVSNLLQS (121 aa). The chain crosses the membrane as a helical span at residues 478–498; the sequence is LLVIGAVFALPVIKLIPTSLL. Residues 499-565 are Extracellular-facing; that stretch reads WGYFAYMAID…QILYFGLCYG (67 aa). A helical transmembrane segment spans residues 566 to 586; sequence VTWIPVAGIMFPVLFFLLVAI. Over 587 to 683 the chain is Cytoplasmic; that stretch reads RQYLLPKLFK…GDGDMSSSRE (97 aa).

This sequence belongs to the anion exchanger (TC 2.A.31.3) family.

The protein resides in the membrane. Functionally, putative boron transporter. Boron is essential for maintaining the integrity of plants cell walls. In Arabidopsis thaliana (Mouse-ear cress), this protein is Putative boron transporter 5 (BOR5).